Consider the following 110-residue polypeptide: Large ribosomal subunit protein uL22 (110 aa).

The protein belongs to the universal ribosomal protein uL22 family. Part of the 50S ribosomal subunit.

Its function is as follows. This protein binds specifically to 23S rRNA; its binding is stimulated by other ribosomal proteins, e.g. L4, L17, and L20. It is important during the early stages of 50S assembly. It makes multiple contacts with different domains of the 23S rRNA in the assembled 50S subunit and ribosome. Functionally, the globular domain of the protein is located near the polypeptide exit tunnel on the outside of the subunit, while an extended beta-hairpin is found that lines the wall of the exit tunnel in the center of the 70S ribosome. This Marinobacter nauticus (strain ATCC 700491 / DSM 11845 / VT8) (Marinobacter aquaeolei) protein is Large ribosomal subunit protein uL22.